The chain runs to 188 residues: GTP cyclohydrolase 1 (188 aa).

Positions 73, 76, and 144 each coordinate Zn(2+).

The protein belongs to the GTP cyclohydrolase I family. In terms of assembly, homomer.

It catalyses the reaction GTP + H2O = 7,8-dihydroneopterin 3'-triphosphate + formate + H(+). It functions in the pathway cofactor biosynthesis; 7,8-dihydroneopterin triphosphate biosynthesis; 7,8-dihydroneopterin triphosphate from GTP: step 1/1. The chain is GTP cyclohydrolase 1 from Caldivirga maquilingensis (strain ATCC 700844 / DSM 13496 / JCM 10307 / IC-167).